The following is a 1079-amino-acid chain: Electrogenic sodium bicarbonate cotransporter 1 (1079 aa).

The tract at residues 1 to 62 is required for interaction with AHCYL1; sequence MEDEAVLDRG…EKKEKERISE (62 aa). At 1-466 the chain is on the cytoplasmic side; it reads MEDEAVLDRG…FASDFYDALN (466 aa). Phosphoserine is present on Glu2. Tyr30 carries the post-translational modification Phosphotyrosine. Positions 39 to 52 are enriched in basic residues; it reads YRRRRRHKRKAGHK. Positions 39–78 are disordered; sequence YRRRRRHKRKAGHKEKKEKERISENYSDKSDVENADESSS. The span at 53–70 shows a compositional bias: basic and acidic residues; the sequence is EKKEKERISENYSDKSDV. Ser61, Ser65, Ser68, Ser223, Ser232, Ser233, and Ser245 each carry phosphoserine. Positions 235–266 are disordered; it reads SRMFSNPDNGSPAMTHRNLTSSSLNDISDKPE. Phosphothreonine is present on residues Thr249 and Thr254. A compositionally biased stretch (polar residues) spans 251-260; it reads RNLTSSSLND. Phosphoserine occurs at positions 256, 257, and 262. Residues 467 to 491 form a helical membrane-spanning segment; it reads IQALSAILFIYLATVTNAITFGGLL. At 492-501 the chain is on the extracellular side; the sequence is GDATDNMQGV. A helical membrane pass occupies residues 502 to 520; the sequence is LESFLGTAVSGAIFCLFAG. A topological domain (cytoplasmic) is located at residue Gln521. Residues 522–542 traverse the membrane as a discontinuously helical segment; the sequence is PLTILSSTGPVLVFERLLFNF. Residues 543-550 are Extracellular-facing; that stretch reads SKDHSFDY. A helical membrane pass occupies residues 551 to 571; it reads LEFRLWIGLWSAFMCLILVAT. Residues 572-585 are Cytoplasmic-facing; sequence DASFLVQYFTRFTE. The helical transmembrane segment at 586-609 threads the bilayer; it reads EGFSSLISFIFIYDAFKKMIKLAD. N-linked (GlcNAc) asparagine glycans are attached at residues Ile597 and Phe617. Topologically, residues 610-692 are extracellular; that stretch reads YYPINSDFRV…GNNCDFVPDI (83 aa). The helical transmembrane segment at 693 to 710 threads the bilayer; that stretch reads TLMSFILFLGTYTSSMAM. Over 711–725 the chain is Cytoplasmic; it reads KKFKTSRYFPTTARK. A helical membrane pass occupies residues 726 to 745; it reads LISDFAIILSILIFCVIDAL. At 746–779 the chain is on the extracellular side; it reads VGVDTPKLIVPSEFKPTSPHRGWFVPPFGGNPWW. The tract at residues 748 to 779 is interaction with CA4; that stretch reads VDTPKLIVPSEFKPTSPHRGWFVPPFGGNPWW. Residues 780-807 form a helical membrane-spanning segment; sequence VCLAAAIPALLVTILIFMDQQITAVIVN. At 808–819 the chain is on the cytoplasmic side; that stretch reads RKEHKLKKGAGY. The helical transmembrane segment at 820–836 threads the bilayer; sequence HLDLFWVAILMVVCSFM. A topological domain (extracellular) is located at residue Ala837. The chain crosses the membrane as a discontinuously helical span at residues 838–855; that stretch reads LPWYVAATVISIAHIDSL. Topologically, residues 856–877 are cytoplasmic; that stretch reads KMETETSAPGEQPKFLGVREQR. A helical transmembrane segment spans residues 878-894; the sequence is VTGTLVFILTGLSVFMA. The Extracellular segment spans residues 895-901; the sequence is PILKFIP. A helical membrane pass occupies residues 902–918; sequence MPVLYGVFLYMGVASLN. The Cytoplasmic portion of the chain corresponds to 919–960; it reads GVQFMDRLKLLLMPLKHQPDFIYLRHVPLRRVHLFTSLQVLC. The segment at residues 961–986 is an intramembrane region (discontinuously helical); it reads LALLWILKSTVAAIIFPVMILALVAV. Topologically, residues 987–1079 are cytoplasmic; that stretch reads RKGMDYLFSQ…STFLERHTSC (93 aa). A CA2-binding region spans residues 1002–1004; the sequence is LDD. The disordered stretch occupies residues 1012–1079; it reads KKKEDEKKKK…STFLERHTSC (68 aa). A phosphoserine mark is found at Ser1026 and Ser1029. Residue Ser1026 is modified to Phosphoserine; by PKA. The segment at 1030–1033 is CA2-binding; it reads DNDD. A phosphoserine mark is found at Ser1034 and Ser1044. The segment at 1057–1059 is required for basolateral targeting; that stretch reads FLS. Phosphoserine is present on residues Asp1060, Leu1064, Ser1069, and Ser1078. Basic and acidic residues predominate over residues 1062–1079; the sequence is KPLDRERSSTFLERHTSC.

The protein belongs to the anion exchanger (TC 2.A.31) family. In terms of assembly, homodimer. Interacts with CA2/carbonic anhydrase 2 and CA4/carbonic anhydrase 4 which may regulate transporter activity. Isoform 1 but not isoform 2 interacts with AHCYL1 (via PEST domain when phosphorylated); the interaction increases SLC4A4 isoform 1 activity. Interacts with AHCYL2. Post-translationally, phosphorylation of Ser-1026 by PKA increases the binding of CA2 and changes the Na(+):HCO3(-) stoichiometry of the transporter from 3:1 to 2:1. Phosphorylated in presence of STK39 and dephosphorylated in presence of PP1 phosphatase; phosphorylation seems to inhibit SLC4A4 activity. In terms of processing, N-glycosylation is not necessary for the transporter basic functions. In terms of tissue distribution, specifically expressed in kidney and to a lower extent in liver, lung, spleen, brain, skeletal muscle and heart. In kidney, expressed in proximal tubules at the corticomedullary junction. Isoform 2 is specifically expressed in kidney. Isoform 1 is expressed in kidney and pancreas while isoform 3 is specifically expressed in brain (at protein level). In brain, isoform 1 is expressed in astrocytes while isoform 3 is expressed in neurons (at protein level). In the eye, isoform 1 is expressed in cornea, conjunctiva, lens epithelium, ciliary bodies and retina while isoform 2 is detected only in the conjunctiva.

Its subcellular location is the basolateral cell membrane. It is found in the cell membrane. The catalysed reaction is 2 hydrogencarbonate(out) + Na(+)(out) = 2 hydrogencarbonate(in) + Na(+)(in). The enzyme catalyses 3 hydrogencarbonate(out) + Na(+)(out) = 3 hydrogencarbonate(in) + Na(+)(in). Inhibited by 4,4'-diisothiocyanatostilbene-2,2'-disulfonic acid (DIDS). Its function is as follows. Electrogenic sodium/bicarbonate cotransporter with a Na(+):HCO3(-) stoichiometry varying from 1:2 to 1:3. May regulate bicarbonate influx/efflux at the basolateral membrane of cells and regulate intracellular pH. The sequence is that of Electrogenic sodium bicarbonate cotransporter 1 (Slc4a4) from Rattus norvegicus (Rat).